We begin with the raw amino-acid sequence, 130 residues long: Neelaredoxin (130 aa).

Fe cation-binding residues include Glu15, His17, His45, His51, Cys115, and His118.

It belongs to the desulfoferrodoxin family. As to quaternary structure, monomer. Requires Fe cation as cofactor.

The catalysed reaction is 2 superoxide + 2 H(+) = H2O2 + O2. Functionally, non-heme iron protein. The chain is Neelaredoxin (nlr) from Megalodesulfovibrio gigas (Desulfovibrio gigas).